Reading from the N-terminus, the 742-residue chain is Alcohol dehydrogenase (quinone), dehydrogenase subunit (742 aa).

The first 35 residues, 1 to 35, serve as a signal peptide directing secretion; the sequence is MTRPASAKRRSLLGILAAGTICAAALPYAAVPARA. Glu96 contacts pyrroloquinoline quinone. Cysteines 142 and 143 form a disulfide. Position 148 (Arg148) interacts with pyrroloquinoline quinone. Glu216 contributes to the Ca(2+) binding site. Thr278 is a binding site for pyrroloquinoline quinone. 2 residues coordinate Ca(2+): Asn298 and Asp343. The active-site Proton acceptor is Asp343. Positions 370 and 584 each coordinate pyrroloquinoline quinone. A Cytochrome c domain is found at 636–715; it reads KVVDNGYFQY…AIRQYLIKRA (80 aa). Heme c is bound by residues Cys649, Cys652, His653, and Met692. Residues 722–732 are compositionally biased toward basic and acidic residues; the sequence is EVDARKNDKNI. Residues 722–742 are disordered; sequence EVDARKNDKNIPENPTLGINP.

This sequence belongs to the bacterial PQQ dehydrogenase family. The alcohol dehydrogenase multicomponent enzyme system is composed of a dehydrogenase subunit I (AdhA) and a cytochrome c subunit II (AdhB). Pyrroloquinoline quinone serves as cofactor. The cofactor is Ca(2+). Requires heme c as cofactor.

It localises to the cell membrane. The enzyme catalyses ethanol + a ubiquinone = a ubiquinol + acetaldehyde. Functionally, dehydrogenase component of the alcohol dehydrogenase multicomponent enzyme system which is involved in the production of acetic acid and in the ethanol oxidase respiratory chain. Quinohemoprotein alcohol dehydrogenase (ADH) catalyzes the oxidation of ethanol to acetaldehyde by transferring electrons to the ubiquinone embedded in the membrane phospholipids. The electrons transfer from ethanol to membranous ubiquinone occurs from pyrroloquinoline quinone (PQQ) to one heme c in subunit I (AdhA), and finally to two heme c in subunit II (AdhB). Besides ubiquinone reduction, ADH also has a ubiquinol (QH2) oxidation reaction which mediates electron transfer from ubiquinol to the non-energy generating bypass oxidase system. The electrons transfer occurs from ubiquinol (QH2) to the additional heme c within subunit II (AdhB). This chain is Alcohol dehydrogenase (quinone), dehydrogenase subunit, found in Acetobacter aceti.